Here is a 443-residue protein sequence, read N- to C-terminus: tRNA-2-methylthio-N(6)-dimethylallyladenosine synthase (443 aa).

The region spanning 3–120 (SKLYIRTFGC…LPDLIDARRR (118 aa)) is the MTTase N-terminal domain. C12, C49, C83, C157, C161, and C164 together coordinate [4Fe-4S] cluster. Positions 143–375 (RTEGSTAFVS…QEKIQLNAQA (233 aa)) constitute a Radical SAM core domain. The 64-residue stretch at 378–441 (QGMVDTVQRI…SHTLRGEISD (64 aa)) folds into the TRAM domain.

It belongs to the methylthiotransferase family. MiaB subfamily. Monomer. [4Fe-4S] cluster is required as a cofactor.

The protein resides in the cytoplasm. The catalysed reaction is N(6)-dimethylallyladenosine(37) in tRNA + (sulfur carrier)-SH + AH2 + 2 S-adenosyl-L-methionine = 2-methylsulfanyl-N(6)-dimethylallyladenosine(37) in tRNA + (sulfur carrier)-H + 5'-deoxyadenosine + L-methionine + A + S-adenosyl-L-homocysteine + 2 H(+). Catalyzes the methylthiolation of N6-(dimethylallyl)adenosine (i(6)A), leading to the formation of 2-methylthio-N6-(dimethylallyl)adenosine (ms(2)i(6)A) at position 37 in tRNAs that read codons beginning with uridine. The protein is tRNA-2-methylthio-N(6)-dimethylallyladenosine synthase of Nitrosomonas europaea (strain ATCC 19718 / CIP 103999 / KCTC 2705 / NBRC 14298).